Reading from the N-terminus, the 421-residue chain is 3-isopropylmalate dehydratase large subunit (421 aa).

Residues Cys-300, Cys-360, and Cys-363 each contribute to the [4Fe-4S] cluster site.

It belongs to the aconitase/IPM isomerase family. LeuC type 2 subfamily. Heterodimer of LeuC and LeuD. The cofactor is [4Fe-4S] cluster.

The enzyme catalyses (2R,3S)-3-isopropylmalate = (2S)-2-isopropylmalate. It participates in amino-acid biosynthesis; L-leucine biosynthesis; L-leucine from 3-methyl-2-oxobutanoate: step 2/4. Functionally, catalyzes the isomerization between 2-isopropylmalate and 3-isopropylmalate, via the formation of 2-isopropylmaleate. This chain is 3-isopropylmalate dehydratase large subunit, found in Thermodesulfovibrio yellowstonii (strain ATCC 51303 / DSM 11347 / YP87).